A 738-amino-acid polypeptide reads, in one-letter code: Probable trehalase (738 aa).

Residues 1–44 (MLQGMPKRSGSISELHDPFSSPDVYYGPATDPRRQKQPNKYSRT) form a disordered region. Substrate is bound by residues Arg-289, 296–297 (WD), Asn-333, Arg-342, 342–344 (RSQ), and Gly-463. Residues Asp-465 and Glu-660 each act as proton donor/acceptor in the active site.

The protein belongs to the glycosyl hydrolase 37 family.

The enzyme catalyses alpha,alpha-trehalose + H2O = alpha-D-glucose + beta-D-glucose. This is Probable trehalase (NTH2) from Eremothecium gossypii (strain ATCC 10895 / CBS 109.51 / FGSC 9923 / NRRL Y-1056) (Yeast).